The sequence spans 368 residues: Phospho-N-acetylmuramoyl-pentapeptide-transferase (368 aa).

10 consecutive transmembrane segments (helical) span residues 32–52 (TGGAVVTGALFVFLFGPWIID), 79–99 (TPTMGGLMILSGLVVSTVLWA), 102–122 (LNPYVWIVLAVTLGFGLIGFY), 142–160 (LLLELLIALAACYALTRLG), 176–196 (VALDLGWFFLGFGAFIIVGAG), 207–227 (GLAIVPVMIAAASFAMIAYLA), 244–264 (AGELAVLCGAVLGAGLGFLWF), 271–291 (IFMGDTGSLALGGMLGSIAVA), 296–316 (IVLAVIGGLFVLEAVSVIVQV), and 345–365 (QIVIRFWIISVMLALAGLSTL).

It belongs to the glycosyltransferase 4 family. MraY subfamily. Requires Mg(2+) as cofactor.

Its subcellular location is the cell inner membrane. It catalyses the reaction UDP-N-acetyl-alpha-D-muramoyl-L-alanyl-gamma-D-glutamyl-meso-2,6-diaminopimeloyl-D-alanyl-D-alanine + di-trans,octa-cis-undecaprenyl phosphate = di-trans,octa-cis-undecaprenyl diphospho-N-acetyl-alpha-D-muramoyl-L-alanyl-D-glutamyl-meso-2,6-diaminopimeloyl-D-alanyl-D-alanine + UMP. It participates in cell wall biogenesis; peptidoglycan biosynthesis. In terms of biological role, catalyzes the initial step of the lipid cycle reactions in the biosynthesis of the cell wall peptidoglycan: transfers peptidoglycan precursor phospho-MurNAc-pentapeptide from UDP-MurNAc-pentapeptide onto the lipid carrier undecaprenyl phosphate, yielding undecaprenyl-pyrophosphoryl-MurNAc-pentapeptide, known as lipid I. The protein is Phospho-N-acetylmuramoyl-pentapeptide-transferase of Nitrobacter winogradskyi (strain ATCC 25391 / DSM 10237 / CIP 104748 / NCIMB 11846 / Nb-255).